The following is a 243-amino-acid chain: Type II restriction enzyme NlaIV (243 aa).

It catalyses the reaction Endonucleolytic cleavage of DNA to give specific double-stranded fragments with terminal 5'-phosphates.. Its function is as follows. A P subtype restriction enzyme that recognizes the double-stranded sequence 5'-GGNNCC-3' and cleaves after N-3. This chain is Type II restriction enzyme NlaIV (nlaIVR), found in Neisseria lactamica.